A 101-amino-acid polypeptide reads, in one-letter code: Small ribosomal subunit protein uS14 (101 aa).

The span at 1–10 (MAKKSSIEKN) shows a compositional bias: basic and acidic residues. Residues 1 to 23 (MAKKSSIEKNNRRKKMTKNAAPK) are disordered. Basic residues predominate over residues 11–23 (NRRKKMTKNAAPK).

It belongs to the universal ribosomal protein uS14 family. Part of the 30S ribosomal subunit. Contacts proteins S3 and S10.

In terms of biological role, binds 16S rRNA, required for the assembly of 30S particles and may also be responsible for determining the conformation of the 16S rRNA at the A site. This is Small ribosomal subunit protein uS14 from Rhodopseudomonas palustris (strain HaA2).